Here is a 700-residue protein sequence, read N- to C-terminus: Elongation factor G (700 aa).

The tr-type G domain occupies 10-285; it reads DRTRNIGIMA…AVIDYLPSPL (276 aa). GTP contacts are provided by residues 19 to 26, 83 to 87, and 137 to 140; these read AHIDAGKT, DTPGH, and NKMD.

The protein belongs to the TRAFAC class translation factor GTPase superfamily. Classic translation factor GTPase family. EF-G/EF-2 subfamily.

It localises to the cytoplasm. Its function is as follows. Catalyzes the GTP-dependent ribosomal translocation step during translation elongation. During this step, the ribosome changes from the pre-translocational (PRE) to the post-translocational (POST) state as the newly formed A-site-bound peptidyl-tRNA and P-site-bound deacylated tRNA move to the P and E sites, respectively. Catalyzes the coordinated movement of the two tRNA molecules, the mRNA and conformational changes in the ribosome. This is Elongation factor G from Lacticaseibacillus paracasei (strain ATCC 334 / BCRC 17002 / CCUG 31169 / CIP 107868 / KCTC 3260 / NRRL B-441) (Lactobacillus paracasei).